The sequence spans 329 residues: Pantothenate kinase (329 aa).

The disordered stretch occupies residues 1-22 (MPAQGPSHGELPPADAGRESSP). 107–114 (GSVAVGKS) serves as a coordination point for ATP.

The protein belongs to the prokaryotic pantothenate kinase family.

The protein localises to the cytoplasm. It carries out the reaction (R)-pantothenate + ATP = (R)-4'-phosphopantothenate + ADP + H(+). The protein operates within cofactor biosynthesis; coenzyme A biosynthesis; CoA from (R)-pantothenate: step 1/5. This is Pantothenate kinase from Nocardioides sp. (strain ATCC BAA-499 / JS614).